The primary structure comprises 109 residues: A-type ATP synthase subunit F (109 aa).

This sequence belongs to the V-ATPase F subunit family. As to quaternary structure, has multiple subunits with at least A(3), B(3), C, D, E, F, H, I and proteolipid K(x).

Its subcellular location is the cell membrane. Component of the A-type ATP synthase that produces ATP from ADP in the presence of a proton gradient across the membrane. This is A-type ATP synthase subunit F from Halorubrum lacusprofundi (strain ATCC 49239 / DSM 5036 / JCM 8891 / ACAM 34).